The primary structure comprises 479 residues: UDP-N-acetylmuramate--L-alanine ligase (479 aa).

127–133 (GTHGKTT) lines the ATP pocket.

It belongs to the MurCDEF family.

The protein localises to the cytoplasm. It catalyses the reaction UDP-N-acetyl-alpha-D-muramate + L-alanine + ATP = UDP-N-acetyl-alpha-D-muramoyl-L-alanine + ADP + phosphate + H(+). The protein operates within cell wall biogenesis; peptidoglycan biosynthesis. Its function is as follows. Cell wall formation. The sequence is that of UDP-N-acetylmuramate--L-alanine ligase from Shewanella denitrificans (strain OS217 / ATCC BAA-1090 / DSM 15013).